The chain runs to 124 residues: Fluoride-specific ion channel FluC (124 aa).

Transmembrane regions (helical) follow at residues 5–25 (ILAV…AGTW), 37–57 (ATLA…GLFL), 69–89 (GLIV…LDTL), and 99–119 (LALG…WAGL). Positions 76 and 79 each coordinate Na(+).

This sequence belongs to the fluoride channel Fluc/FEX (TC 1.A.43) family.

The protein resides in the cell inner membrane. The catalysed reaction is fluoride(in) = fluoride(out). Its activity is regulated as follows. Na(+) is not transported, but it plays an essential structural role and its presence is essential for fluoride channel function. Fluoride-specific ion channel. Important for reducing fluoride concentration in the cell, thus reducing its toxicity. The polypeptide is Fluoride-specific ion channel FluC (Pseudomonas syringae pv. tomato (strain ATCC BAA-871 / DC3000)).